Here is a 169-residue protein sequence, read N- to C-terminus: Ribosome maturation factor RimM (169 aa).

One can recognise a PRC barrel domain in the interval 94–168; sequence DDEFYHADLI…RIVADPPEGL (75 aa).

It belongs to the RimM family. As to quaternary structure, binds ribosomal protein uS19.

It is found in the cytoplasm. An accessory protein needed during the final step in the assembly of 30S ribosomal subunit, possibly for assembly of the head region. Essential for efficient processing of 16S rRNA. May be needed both before and after RbfA during the maturation of 16S rRNA. It has affinity for free ribosomal 30S subunits but not for 70S ribosomes. The polypeptide is Ribosome maturation factor RimM (Cereibacter sphaeroides (strain ATCC 17025 / ATH 2.4.3) (Rhodobacter sphaeroides)).